Reading from the N-terminus, the 429-residue chain is Serine/threonine-protein kinase BGLF4 (429 aa).

Residues 1-27 are disordered; it reads MDVNMAAELSPTNSSSSGELSVSPEPP. Residues 1-409 form the Protein kinase domain; it reads MDVNMAAELS…CRPRFEHPHL (409 aa). Residues 14–23 are compositionally biased toward low complexity; that stretch reads SSSSGELSVS. An SUMO interaction motif region spans residues 36 to 40; that stretch reads KVTVI. Residues 110–118 and Glu-128 each bind ATP; that span reads LYHELMVCD. The active-site Proton acceptor is the Asp-195. The SUMO interaction motif stretch occupies residues 344 to 350; sequence VVLLEVL.

It belongs to the protein kinase superfamily. Ser/Thr protein kinase family. In terms of assembly, interacts with host NUP62 and NUP153; this interaction plays a role in nuclear targeting of BGLF4. Interacts with host SUMO1 and SUMO2.

It is found in the virion tegument. The protein localises to the host nucleus. The catalysed reaction is L-seryl-[protein] + ATP = O-phospho-L-seryl-[protein] + ADP + H(+). It catalyses the reaction L-threonyl-[protein] + ATP = O-phospho-L-threonyl-[protein] + ADP + H(+). Its function is as follows. Plays many key roles by phosphorylating several proteins including the viral DNA processivity factor BMRF1, EBNA1 or EBNA2. Modifies the host nuclear envelope structure and induces the redistribution of nuclear envelope-associated proteins by phosphorylating host nucleoporins. Subsequently, promotes the nuclear transport of EBV lytic proteins. Required for efficient lytic DNA replication and release of nucleocapsids from the nucleus. Contributes to the compaction of host cell chromatin in cells undergoing lytic replication, presumably by phosphorylating the host condensin complex and host TOP2A. Induces disassembly of the nuclear lamina by phosphorylating with host LMNA. Phosphorylates substrates involved in capsid assembly and DNA packaging. Facilitates the switch from latent to lytic DNA replication by down-regulating EBNA1 replication function. Phosphorylates the viral immediate-early protein BZLF1 and inhibits its sumoylation by interacting with host SUMO1 and SUMO2. Phosphorylates also host SAMHD1 and thereby counteracts its antiviral effect by reducing its dNTP hydrolase activity. This chain is Serine/threonine-protein kinase BGLF4, found in Epstein-Barr virus (strain AG876) (HHV-4).